Reading from the N-terminus, the 33-residue chain is Neutrophil defensin 1 (33 aa).

Intrachain disulfides connect Cys-3/Cys-31, Cys-5/Cys-20, and Cys-10/Cys-30.

The protein belongs to the alpha-defensin family.

It localises to the secreted. Functionally, anti-fungal and bactericidal activity, greater against Gram-positive bacteria. The sequence is that of Neutrophil defensin 1 from Mesocricetus auratus (Golden hamster).